Here is a 1356-residue protein sequence, read N- to C-terminus: Fibronectin type III domain containing protein 3C1 (1356 aa).

Disordered stretches follow at residues 303 to 341 (PRNM…SDNN), 356 to 402 (TYDE…SDVA), and 428 to 452 (NQKK…QPGC). Residues 308–341 (DNIPDTNTTDTITSSSAHTPSISTSNATFCSDNN) are compositionally biased toward low complexity. Positions 370-393 (PSCTSQSASNPSVSENAHNPSSIN) are enriched in polar residues. Basic and acidic residues predominate over residues 439–448 (LKEHNTEDRT). Fibronectin type-III domains lie at 454 to 549 (NIEK…TPGC), 553 to 648 (PPLA…TPPA), 650 to 741 (LPPK…TRPA), and 745 to 842 (CPNK…TLPP). The segment covering 825 to 838 (GQSRPSDVLTIQTP) has biased composition (polar residues). Residues 825–894 (GQSRPSDVLT…QDRKVHPSSE (70 aa)) are disordered. A compositionally biased stretch (basic and acidic residues) spans 883-894 (PHQDRKVHPSSE). Fibronectin type-III domains are found at residues 914–1007 (PPSQ…TPGT), 1017–1103 (EVES…TKPL), 1104–1199 (PPEP…TKSP), and 1202–1299 (ALKA…TYKH). Residues 1299–1320 (HHSGHGKGSGSKGKGNHNDKGE) form a disordered region. The helical transmembrane segment at 1330–1350 (TFVLTLLIGFALIAVLCAVAV) threads the bilayer. Topologically, residues 1351–1356 (QYLLIN) are cytoplasmic.

Belongs to the FNDC3 family.

Its subcellular location is the membrane. In Mus musculus (Mouse), this protein is Fibronectin type III domain containing protein 3C1 (Fndc3c1).